The primary structure comprises 258 residues: Glutamate racemase (258 aa).

Substrate-binding positions include 11–12 and 43–44; these read DS and YG. Cys74 acts as the Proton donor/acceptor in catalysis. 75–76 lines the substrate pocket; it reads NT. Cys187 acts as the Proton donor/acceptor in catalysis. Substrate is bound at residue 188-189; the sequence is TH.

Belongs to the aspartate/glutamate racemases family.

The enzyme catalyses L-glutamate = D-glutamate. Its pathway is cell wall biogenesis; peptidoglycan biosynthesis. Functionally, provides the (R)-glutamate required for cell wall biosynthesis. The sequence is that of Glutamate racemase from Bifidobacterium adolescentis (strain ATCC 15703 / DSM 20083 / NCTC 11814 / E194a).